The following is a 599-amino-acid chain: Proline--tRNA ligase (599 aa).

Belongs to the class-II aminoacyl-tRNA synthetase family. ProS type 1 subfamily. As to quaternary structure, homodimer.

It is found in the cytoplasm. It carries out the reaction tRNA(Pro) + L-proline + ATP = L-prolyl-tRNA(Pro) + AMP + diphosphate. Its function is as follows. Catalyzes the attachment of proline to tRNA(Pro) in a two-step reaction: proline is first activated by ATP to form Pro-AMP and then transferred to the acceptor end of tRNA(Pro). As ProRS can inadvertently accommodate and process non-cognate amino acids such as alanine and cysteine, to avoid such errors it has two additional distinct editing activities against alanine. One activity is designated as 'pretransfer' editing and involves the tRNA(Pro)-independent hydrolysis of activated Ala-AMP. The other activity is designated 'posttransfer' editing and involves deacylation of mischarged Ala-tRNA(Pro). The misacylated Cys-tRNA(Pro) is not edited by ProRS. The polypeptide is Proline--tRNA ligase (Bifidobacterium animalis subsp. lactis (strain AD011)).